Consider the following 215-residue polypeptide: HTH-type transcriptional repressor FabR (215 aa).

One can recognise an HTH tetR-type domain in the interval K10–L70. Residues S33 to F52 constitute a DNA-binding region (H-T-H motif).

As to quaternary structure, homodimer.

It localises to the cytoplasm. In terms of biological role, represses the transcription of fabB, involved in unsaturated fatty acid (UFA) biosynthesis. By controlling UFA production, FabR directly influences the physical properties of the membrane bilayer. In Escherichia coli (strain K12 / MC4100 / BW2952), this protein is HTH-type transcriptional repressor FabR.